A 491-amino-acid chain; its full sequence is Regulatory protein NPR5 (491 aa).

One can recognise a BTB domain in the interval 26-116 (SDVTFSVEGR…LYSGQVSIVP (91 aa)). A C2HC NPR-type zinc finger spans residues 122-136 (RPNCGERGCWHTHCS). Zn(2+) contacts are provided by Cys-125, Cys-130, His-132, and Cys-135. ANK repeat units lie at residues 254–283 (QKIR…LNLD), 284–313 (ESLA…DVNY), 318–347 (AGKT…DPNV), and 351–385 (GGIT…KLRL). The interval 400–491 (EEGNNSNNQN…MYHHHHQHHF (92 aa)) is disordered. The segment covering 403–413 (NNSNNQNNDNN) has biased composition (low complexity). Over residues 457-470 (DQGDDHNSQREGMS) the composition is skewed to basic and acidic residues.

It belongs to the plant 'ANKYRIN-BTB/POZ' family. 'NOOT-BOP-COCH-like' (NBCL) subfamily. In terms of assembly, homodimer or heterodimer with BOP1. Interacts with PAN. As to expression, highly expressed in young floral meristem. Predominantly expressed in the boundary between floral meristem (FM) and sepal primordia.

It localises to the cytoplasm. The protein localises to the nucleus. It participates in protein modification; protein ubiquitination. Functionally, may act as a substrate-specific adapter of an E3 ubiquitin-protein ligase complex (CUL3-RBX1-BTB) which mediates the ubiquitination and subsequent proteasomal degradation of target proteins. Acts redundantly with BOP2. BOP1/2 promote leaf and floral meristem fate and determinacy in a pathway targeting AP1 and AGL24. BOP1/2 act as transcriptional co-regulators through direct interaction with TGA factors, including PAN, a direct regulator of AP1. Controls lateral organ fate through positive regulation of adaxial-abaxial polarity genes ATHB-14/PHB, YAB1/FIL and YAB3, and through positive regulation of LOB domain-containing genes LOB, LBD6/AS2 and LBD36. Promotes and maintains a developmentally determinate state in leaf cells through the negative regulation of JAG, JGL and class I KNOX genes. Is also involved in nectary development, formation of normal abscission zones (AZs) and suppression of bract formation, probably by regulating the cell wall disorganization. The protein is Regulatory protein NPR5 of Arabidopsis thaliana (Mouse-ear cress).